The following is a 28-amino-acid chain: Dermaseptin-DI2 (28 aa).

In terms of tissue distribution, expressed by the skin glands.

It localises to the secreted. In terms of biological role, has antibacterial activity against the Gram-positive bacteria S.aureus and E.faecalis, and the Gram-negative bacteria P.aeruginosa and E.coli. Has antiprotozoal activity against T.cruzi. Has antifungal activity against the yeasts C.tropicalis (MIC=10.9 uM), C.guilliermondii (MIC=21.8 uM), C.albicans (MIC=21.8 uM) and C.albicans ATCC 1023 (MIC=10.9 uM). Decreases viability of murine peritoneal cells. Fuses to, and disrupts liposomes. The chain is Dermaseptin-DI2 from Phyllomedusa distincta (Monkey frog).